Consider the following 141-residue polypeptide: Ly6/PLAUR domain-containing protein 1 (141 aa).

A signal peptide spans 1 to 20 (MWVLGIAATFCGLFWLPGLA). 6 disulfide bridges follow: Cys-25/Cys-54, Cys-28/Cys-37, Cys-46/Cys-71, Cys-77/Cys-100, Cys-88/Cys-97, and Cys-101/Cys-106. Residues 25–108 (CYQCEEFQLN…SCCNTPLCNG (84 aa)) form the UPAR/Ly6 domain. An N-linked (GlcNAc...) asparagine glycan is attached at Asn-45. Gly-115 carries GPI-anchor amidated glycine lipidation. The propeptide at 116 to 141 (SSASAIRPELFTTVLFFNLALCLAHC) is removed in mature form.

In terms of assembly, interacts with CHRNA4 and nAChRs containing alpha-4:beta-2 (CHRNA4:CHRNB2) and alpha-7 (CHRNA7) subunits.

The protein localises to the cell membrane. Its function is as follows. Believed to act as a modulator of nicotinic acetylcholine receptors (nAChRs) activity. In vitro increases receptor desensitization and decreases affinity for ACh of alpha-4:beta-2-containing nAChRs. May play a role in the intracellular trafficking of alpha-4:beta-2 and alpha-7-containing nAChRs and may inhibit their expression at the cell surface. May be involved in the control of anxiety. The chain is Ly6/PLAUR domain-containing protein 1 (Lypd1) from Rattus norvegicus (Rat).